A 517-amino-acid chain; its full sequence is Intermediate filament family orphan 2 (517 aa).

An IF rod domain is found at 53–484 (NIHLLKGLNV…RLIKGSADRN (432 aa)). Disordered regions lie at residues 104-129 (EQAV…SSGA), 330-349 (KVAS…RFSD), and 478-517 (KGSA…PMVS). A compositionally biased stretch (low complexity) spans 485–497 (SPSPSSVASSDSG). The segment covering 501-517 (EIQDEFEREADVEPMVS) has biased composition (acidic residues).

It belongs to the intermediate filament family.

The sequence is that of Intermediate filament family orphan 2 (IFFO2) from Homo sapiens (Human).